Reading from the N-terminus, the 651-residue chain is DNA mismatch repair protein MutL (651 aa).

The disordered stretch occupies residues 336–398; that stretch reads RLDMTEPETG…ANSGYQPENP (63 aa). Residues 385–394 are compositionally biased toward polar residues; the sequence is ARESANSGYQ.

This sequence belongs to the DNA mismatch repair MutL/HexB family.

In terms of biological role, this protein is involved in the repair of mismatches in DNA. It is required for dam-dependent methyl-directed DNA mismatch repair. May act as a 'molecular matchmaker', a protein that promotes the formation of a stable complex between two or more DNA-binding proteins in an ATP-dependent manner without itself being part of a final effector complex. The sequence is that of DNA mismatch repair protein MutL from Pectobacterium atrosepticum (strain SCRI 1043 / ATCC BAA-672) (Erwinia carotovora subsp. atroseptica).